The primary structure comprises 208 residues: N-(5'-phosphoribosyl)anthranilate isomerase (208 aa).

It belongs to the TrpF family.

The enzyme catalyses N-(5-phospho-beta-D-ribosyl)anthranilate = 1-(2-carboxyphenylamino)-1-deoxy-D-ribulose 5-phosphate. The protein operates within amino-acid biosynthesis; L-tryptophan biosynthesis; L-tryptophan from chorismate: step 3/5. The chain is N-(5'-phosphoribosyl)anthranilate isomerase from Nitrosomonas eutropha (strain DSM 101675 / C91 / Nm57).